The sequence spans 325 residues: Glycerol-3-phosphate dehydrogenase [NAD(P)+] (325 aa).

NADPH contacts are provided by W11, R30, and K103. Residues K103, G131, and S133 each coordinate sn-glycerol 3-phosphate. Position 135 (A135) interacts with NADPH. Sn-glycerol 3-phosphate contacts are provided by K186, D242, S252, R253, and N254. The Proton acceptor role is filled by K186. NADPH is bound at residue R253. 2 residues coordinate NADPH: V279 and E281.

This sequence belongs to the NAD-dependent glycerol-3-phosphate dehydrogenase family.

Its subcellular location is the cytoplasm. It catalyses the reaction sn-glycerol 3-phosphate + NAD(+) = dihydroxyacetone phosphate + NADH + H(+). The catalysed reaction is sn-glycerol 3-phosphate + NADP(+) = dihydroxyacetone phosphate + NADPH + H(+). It functions in the pathway membrane lipid metabolism; glycerophospholipid metabolism. Its function is as follows. Catalyzes the reduction of the glycolytic intermediate dihydroxyacetone phosphate (DHAP) to sn-glycerol 3-phosphate (G3P), the key precursor for phospholipid synthesis. This chain is Glycerol-3-phosphate dehydrogenase [NAD(P)+], found in Wolbachia pipientis subsp. Culex pipiens (strain wPip).